Consider the following 156-residue polypeptide: Hydrogenase 3 maturation protease (156 aa).

Ni(2+) is bound by residues aspartate 16, aspartate 62, and histidine 90.

It belongs to the peptidase A31 family. As to quaternary structure, monomer.

The enzyme catalyses This enzyme specifically removes a 32-amino acid peptide from the C-terminus of the precursor of the large subunit of E.coli hydrogenase 3 by cleavage at the C-terminal side of Arg-537.. Protease involved in the C-terminal processing of HycE, the large subunit of hydrogenase 3. The polypeptide is Hydrogenase 3 maturation protease (hycI) (Escherichia coli O157:H7).